A 205-amino-acid chain; its full sequence is Large ribosomal subunit protein bL25 (205 aa).

Belongs to the bacterial ribosomal protein bL25 family. CTC subfamily. In terms of assembly, part of the 50S ribosomal subunit; part of the 5S rRNA/L5/L18/L25 subcomplex. Contacts the 5S rRNA. Binds to the 5S rRNA independently of L5 and L18.

Its function is as follows. This is one of the proteins that binds to the 5S RNA in the ribosome where it forms part of the central protuberance. The sequence is that of Large ribosomal subunit protein bL25 from Bartonella bacilliformis (strain ATCC 35685 / KC583 / Herrer 020/F12,63).